Reading from the N-terminus, the 60-residue chain is Small, acid-soluble spore protein C2 (60 aa).

Belongs to the alpha/beta-type SASP family. In terms of processing, SASP are degraded in the first minutes of spore germination and provide amino acids for both new protein synthesis and metabolism.

SASP are bound to spore DNA. They are double-stranded DNA-binding proteins that cause DNA to change to an a-like conformation. They protect the DNA backbone from chemical and enzymatic cleavage and are thus involved in dormant spore's high resistance to UV light. In Clostridium perfringens (strain 13 / Type A), this protein is Small, acid-soluble spore protein C2 (sspC2).